A 282-amino-acid chain; its full sequence is Chlorite dismutase (282 aa).

The signal sequence occupies residues 1-31; it reads MTNLSIHNFKLSLVAAVIGSAMVMTSSPVAA. Glu-104 is a Ca(2+) binding site. A heme-binding site is contributed by His-204. Arg-217 functions as the Proton acceptor in the catalytic mechanism. Residues Asp-226 and Thr-265 each coordinate Ca(2+).

The protein belongs to the chlorite dismutase family. As to quaternary structure, homopentamer. Heme b is required as a cofactor.

The protein localises to the periplasm. It catalyses the reaction chloride + O2 = chlorite. In terms of biological role, catalyzes the heme-dependent decomposition of chlorite to O(2) and chloride with high efficiency and specificity. Used to detoxify chlorite, a by-product of the reduction of perchlorate, a primarily anthropogenic pollutant, in perchlorate-respiring bacteria. This Dechloromonas aromatica (strain RCB) protein is Chlorite dismutase.